A 287-amino-acid polypeptide reads, in one-letter code: MKVICGSVFLFSLFFQVVLGDYFSSSSGNPNLRTTKVYTVVSGTHLATAESTVSKTITTTKGLPTNAYYNCVPSKYIQSDIPMCAPNQGDRWVKGRKYKVSWDPLYFGVDNLLMVVSYLNDSGLIAATKKVQNSKGEIMLKANKGWLHDDSFQNVTIDLVTISENNMTLLTGPRILLAKDLDSATAAAENAAFYGPRRNIKAAIAVPSVILGLILVALVYYAYRKDTWKIYMAKIRIRRSAPGYGVRRSRRQRMQSRPVAYTSLPADAHFEDSDDEDYYQSQVKKFH.

The N-terminal stretch at 1 to 20 (MKVICGSVFLFSLFFQVVLG) is a signal peptide. Over 22-201 (YFSSSSGNPN…AFYGPRRNIK (180 aa)) the chain is Extracellular. N-linked (GlcNAc...) asparagine glycosylation is found at N120, N154, and N166. The helical transmembrane segment at 202–222 (AAIAVPSVILGLILVALVYYA) threads the bilayer. Residues 223–287 (YRKDTWKIYM…YYQSQVKKFH (65 aa)) are Cytoplasmic-facing.

Its subcellular location is the membrane. This is an uncharacterized protein from Schizosaccharomyces pombe (strain 972 / ATCC 24843) (Fission yeast).